Consider the following 828-residue polypeptide: Molybdenum cofactor sulfurase (828 aa).

Lysine 239 bears the N6-(pyridoxal phosphate)lysine mark. Cysteine 402 is an active-site residue. Residues 638 to 682 (TRYTRRSLHSRSSTAALRRQRPVEESSMPGSFPSDTPLSRTPEPP) are disordered. Residues 652 to 825 (AALRRQRPVE…VMVGDVVRPW (174 aa)) form the MOSC domain.

This sequence belongs to the class-V pyridoxal-phosphate-dependent aminotransferase family. MOCOS subfamily. The cofactor is pyridoxal 5'-phosphate.

It carries out the reaction Mo-molybdopterin + L-cysteine + AH2 = thio-Mo-molybdopterin + L-alanine + A + H2O. Functionally, sulfurates the molybdenum cofactor. Sulfation of molybdenum is essential for xanthine dehydrogenase (XDH) and aldehyde oxidase (ADO) enzymes in which molybdenum cofactor is liganded by 1 oxygen and 1 sulfur atom in active form. The protein is Molybdenum cofactor sulfurase of Aspergillus terreus (strain NIH 2624 / FGSC A1156).